The primary structure comprises 447 residues: uncharacterized protein (447 aa).

The protein belongs to the class-II fumarase/aspartase family.

The protein resides in the cytoplasm. It localises to the nucleus. This is an uncharacterized protein from Schizosaccharomyces pombe (strain 972 / ATCC 24843) (Fission yeast).